A 473-amino-acid chain; its full sequence is Cell division protein FtsP (473 aa).

Positions 1 to 27 form a signal peptide, tat-type signal; it reads MSFSRRQFLQASGLAVCLGSLSSSVRA.

This sequence belongs to the FtsP family. Predicted to be exported by the Tat system. The position of the signal peptide cleavage has not been experimentally proven.

Its subcellular location is the periplasm. In terms of biological role, cell division protein that is required for growth during stress conditions. May be involved in protecting or stabilizing the divisomal assembly under conditions of stress. This chain is Cell division protein FtsP, found in Proteus mirabilis (strain HI4320).